A 310-amino-acid chain; its full sequence is Methionyl-tRNA formyltransferase (310 aa).

Position 110–113 (110–113) interacts with (6S)-5,6,7,8-tetrahydrofolate; that stretch reads SVLP. Residues 283-310 are disordered; it reads TVQPPGKKSMNAADWARGARAEDIRRAR. A compositionally biased stretch (basic and acidic residues) spans 299 to 310; the sequence is RGARAEDIRRAR.

It belongs to the Fmt family.

It carries out the reaction L-methionyl-tRNA(fMet) + (6R)-10-formyltetrahydrofolate = N-formyl-L-methionyl-tRNA(fMet) + (6S)-5,6,7,8-tetrahydrofolate + H(+). In terms of biological role, attaches a formyl group to the free amino group of methionyl-tRNA(fMet). The formyl group appears to play a dual role in the initiator identity of N-formylmethionyl-tRNA by promoting its recognition by IF2 and preventing the misappropriation of this tRNA by the elongation apparatus. The polypeptide is Methionyl-tRNA formyltransferase (Mycolicibacterium gilvum (strain PYR-GCK) (Mycobacterium gilvum (strain PYR-GCK))).